The following is a 208-amino-acid chain: FMN-dependent NADH:quinone oxidoreductase (208 aa).

FMN contacts are provided by residues 17–19 (SNS), 99–102 (MWNL), and 143–146 (SRGG).

Belongs to the azoreductase type 1 family. In terms of assembly, homodimer. It depends on FMN as a cofactor.

The catalysed reaction is 2 a quinone + NADH + H(+) = 2 a 1,4-benzosemiquinone + NAD(+). It carries out the reaction N,N-dimethyl-1,4-phenylenediamine + anthranilate + 2 NAD(+) = 2-(4-dimethylaminophenyl)diazenylbenzoate + 2 NADH + 2 H(+). Its function is as follows. Quinone reductase that provides resistance to thiol-specific stress caused by electrophilic quinones. Functionally, also exhibits azoreductase activity. Catalyzes the reductive cleavage of the azo bond in aromatic azo compounds to the corresponding amines. The protein is FMN-dependent NADH:quinone oxidoreductase of Staphylococcus aureus (strain bovine RF122 / ET3-1).